The primary structure comprises 239 residues: Pyridoxine 5'-phosphate synthase (239 aa).

A 3-amino-2-oxopropyl phosphate-binding site is contributed by asparagine 7. Position 9-10 (9-10) interacts with 1-deoxy-D-xylulose 5-phosphate; the sequence is DH. Residue arginine 18 participates in 3-amino-2-oxopropyl phosphate binding. Catalysis depends on histidine 43, which acts as the Proton acceptor. 1-deoxy-D-xylulose 5-phosphate contacts are provided by arginine 45 and histidine 50. Glutamate 70 functions as the Proton acceptor in the catalytic mechanism. Threonine 100 contributes to the 1-deoxy-D-xylulose 5-phosphate binding site. Catalysis depends on histidine 191, which acts as the Proton donor. Residues glycine 192 and 213 to 214 each bind 3-amino-2-oxopropyl phosphate; that span reads GH.

It belongs to the PNP synthase family. In terms of assembly, homooctamer; tetramer of dimers.

The protein localises to the cytoplasm. It catalyses the reaction 3-amino-2-oxopropyl phosphate + 1-deoxy-D-xylulose 5-phosphate = pyridoxine 5'-phosphate + phosphate + 2 H2O + H(+). It participates in cofactor biosynthesis; pyridoxine 5'-phosphate biosynthesis; pyridoxine 5'-phosphate from D-erythrose 4-phosphate: step 5/5. Catalyzes the complicated ring closure reaction between the two acyclic compounds 1-deoxy-D-xylulose-5-phosphate (DXP) and 3-amino-2-oxopropyl phosphate (1-amino-acetone-3-phosphate or AAP) to form pyridoxine 5'-phosphate (PNP) and inorganic phosphate. In Nostoc sp. (strain PCC 7120 / SAG 25.82 / UTEX 2576), this protein is Pyridoxine 5'-phosphate synthase.